The chain runs to 319 residues: Beta-ketoacyl-[acyl-carrier-protein] synthase III (319 aa).

Active-site residues include cysteine 112 and histidine 246. Positions glutamine 247–arginine 251 are ACP-binding. The active site involves asparagine 276.

It belongs to the thiolase-like superfamily. FabH family. In terms of assembly, homodimer.

It is found in the cytoplasm. The enzyme catalyses malonyl-[ACP] + acetyl-CoA + H(+) = 3-oxobutanoyl-[ACP] + CO2 + CoA. Its pathway is lipid metabolism; fatty acid biosynthesis. In terms of biological role, catalyzes the condensation reaction of fatty acid synthesis by the addition to an acyl acceptor of two carbons from malonyl-ACP. Catalyzes the first condensation reaction which initiates fatty acid synthesis and may therefore play a role in governing the total rate of fatty acid production. Possesses both acetoacetyl-ACP synthase and acetyl transacylase activities. Its substrate specificity determines the biosynthesis of branched-chain and/or straight-chain of fatty acids. The polypeptide is Beta-ketoacyl-[acyl-carrier-protein] synthase III (Shewanella oneidensis (strain ATCC 700550 / JCM 31522 / CIP 106686 / LMG 19005 / NCIMB 14063 / MR-1)).